The chain runs to 1002 residues: Lon protease homolog, mitochondrial (1002 aa).

Residues 102 to 313 (VIALPLPHRP…LTLELVKKEM (212 aa)) form the Lon N-terminal domain. 468–475 (GPPGVGKT) contributes to the ATP binding site. The region spanning 811 to 995 (QTPVGVVMGL…NEIFDIAFQS (185 aa)) is the Lon proteolytic domain. Catalysis depends on residues Ser901 and Lys944.

It belongs to the peptidase S16 family. In terms of assembly, homohexamer or homoheptamer. Organized in a ring with a central cavity.

It is found in the mitochondrion matrix. It carries out the reaction Hydrolysis of proteins in presence of ATP.. Its function is as follows. ATP-dependent serine protease that mediates the selective degradation of misfolded, unassembled or oxidatively damaged polypeptides as well as certain short-lived regulatory proteins in the mitochondrial matrix. May also have a chaperone function in the assembly of inner membrane protein complexes. Participates in the regulation of mitochondrial gene expression and in the maintenance of the integrity of the mitochondrial genome. Binds to mitochondrial DNA in a site-specific manner. In Oryza sativa subsp. japonica (Rice), this protein is Lon protease homolog, mitochondrial.